The chain runs to 450 residues: Asparagine--tRNA ligase (450 aa).

The protein belongs to the class-II aminoacyl-tRNA synthetase family. As to quaternary structure, homodimer.

The protein resides in the cytoplasm. The enzyme catalyses tRNA(Asn) + L-asparagine + ATP = L-asparaginyl-tRNA(Asn) + AMP + diphosphate + H(+). This Enterococcus faecalis (strain ATCC 700802 / V583) protein is Asparagine--tRNA ligase.